A 70-amino-acid polypeptide reads, in one-letter code: Sec-independent protein translocase protein TatA (70 aa).

A helical transmembrane segment spans residues Met-1 to Gly-21. The segment at Lys-45 to Gly-70 is disordered.

This sequence belongs to the TatA/E family. In terms of assembly, the Tat system comprises two distinct complexes: a TatABC complex, containing multiple copies of TatA, TatB and TatC subunits, and a separate TatA complex, containing only TatA subunits. Substrates initially bind to the TatABC complex, which probably triggers association of the separate TatA complex to form the active translocon.

The protein resides in the cell inner membrane. Functionally, part of the twin-arginine translocation (Tat) system that transports large folded proteins containing a characteristic twin-arginine motif in their signal peptide across membranes. TatA could form the protein-conducting channel of the Tat system. In Phenylobacterium zucineum (strain HLK1), this protein is Sec-independent protein translocase protein TatA.